The chain runs to 413 residues: S-adenosylmethionine synthase (413 aa).

H15 is a binding site for ATP. D17 lines the Mg(2+) pocket. E43 is a binding site for K(+). The L-methionine site is built by E56 and Q100. The tract at residues 100–110 (QSPDISQGVNE) is flexible loop. ATP contacts are provided by residues 171–173 (DGK), 248–249 (KF), D257, 263–264 (RK), A280, and K284. D257 contributes to the L-methionine binding site. K288 is an L-methionine binding site.

Belongs to the AdoMet synthase family. As to quaternary structure, homotetramer; dimer of dimers. Mg(2+) serves as cofactor. K(+) is required as a cofactor.

The protein localises to the cytoplasm. It carries out the reaction L-methionine + ATP + H2O = S-adenosyl-L-methionine + phosphate + diphosphate. Its pathway is amino-acid biosynthesis; S-adenosyl-L-methionine biosynthesis; S-adenosyl-L-methionine from L-methionine: step 1/1. Its function is as follows. Catalyzes the formation of S-adenosylmethionine (AdoMet) from methionine and ATP. The overall synthetic reaction is composed of two sequential steps, AdoMet formation and the subsequent tripolyphosphate hydrolysis which occurs prior to release of AdoMet from the enzyme. This Prochlorococcus marinus (strain MIT 9515) protein is S-adenosylmethionine synthase.